The sequence spans 292 residues: RNA 5'-monophosphate methyltransferase (292 aa).

The interval 1-22 (MAASTEQATGGVEKTAAEEKPR) is disordered. Residues R46, N76, D110, 135–136 (DF), and M164 each bind S-adenosyl-L-methionine. The 222-residue stretch at 53–274 (ELLRRLFPQS…KQATETHPIP (222 aa)) folds into the Bin3-type SAM domain.

This sequence belongs to the methyltransferase superfamily. Interacts with DICER1; the interaction may be mediated by RNA.

It localises to the cytoplasm. It catalyses the reaction a 5'-end 5'-phospho-ribonucleoside-RNA + S-adenosyl-L-methionine = a 5'-end (5'-methylphospho)-ribonucleoside-RNA + S-adenosyl-L-homocysteine. The enzyme catalyses a 5'-end 5'-phospho-ribonucleoside-RNA + 2 S-adenosyl-L-methionine = a 5'-end (5'-bismethylphospho)-ribonucleoside-RNA + 2 S-adenosyl-L-homocysteine. O-methyltransferase that specifically monomethylates 5'-monophosphate of cytoplasmic histidyl tRNA (tRNA(His)), acting as a capping enzyme by protecting tRNA(His) from cleavage by DICER1. Also able, with less efficiently, to methylate the 5' monophosphate of a subset of pre-miRNAs, acting as a negative regulator of miRNA processing. The 5' monophosphate of pre-miRNAs is recognized by DICER1 and is required for pre-miRNAs processing: methylation at this position reduces the processing of pre-miRNAs by DICER1. Was also reported to mediate dimethylation of pre-miR-145; however dimethylation cannot be reproduced by another group which observes a monomethylation of pre-miR-145. The sequence is that of RNA 5'-monophosphate methyltransferase (BCDIN3D) from Bos taurus (Bovine).